A 134-amino-acid chain; its full sequence is uncharacterized protein (134 aa).

A run of 2 helical transmembrane segments spans residues 49–69 (VAVPAVLVLAPFWLIPTSLDV) and 71–91 (LSMTLPILIPFVYFSHALNKV).

Its subcellular location is the cell membrane. This is an uncharacterized protein from Mycobacterium tuberculosis (strain ATCC 25618 / H37Rv).